The sequence spans 56 residues: Large ribosomal subunit protein bL32 (56 aa).

Residues 1–35 are disordered; it reads MAVQQNKPTRSKRGMRRSHDALTATHVSVDKTSGE.

Belongs to the bacterial ribosomal protein bL32 family.

The chain is Large ribosomal subunit protein bL32 from Proteus mirabilis (strain HI4320).